The sequence spans 187 residues: Probable chorismate pyruvate-lyase (187 aa).

The substrate site is built by Arg-77, Leu-115, and Glu-174.

It belongs to the UbiC family.

The protein resides in the cytoplasm. It carries out the reaction chorismate = 4-hydroxybenzoate + pyruvate. Its pathway is cofactor biosynthesis; ubiquinone biosynthesis. Its function is as follows. Removes the pyruvyl group from chorismate, with concomitant aromatization of the ring, to provide 4-hydroxybenzoate (4HB) for the ubiquinone pathway. This Shewanella sp. (strain ANA-3) protein is Probable chorismate pyruvate-lyase.